The following is a 1058-amino-acid chain: Carbamoyl phosphate synthase large chain (1058 aa).

Positions 1 to 401 are carboxyphosphate synthetic domain; that stretch reads MPKRTDIQKI…SLLKACRSLE (401 aa). ATP contacts are provided by Arg-129, Arg-169, Gly-175, Gly-176, Arg-208, Ile-210, Glu-215, Gly-241, Ile-242, His-243, Gln-284, and Glu-298. The ATP-grasp 1 domain maps to 133-327; the sequence is KQLMEELEQP…IAKLAAKIAV (195 aa). Positions 284, 298, and 300 each coordinate Mg(2+). Residues Gln-284, Glu-298, and Asn-300 each contribute to the Mn(2+) site. Residues 402-546 form an oligomerization domain region; the sequence is IGVHHNEIPE…YSTYGWENES (145 aa). The interval 547–929 is carbamoyl phosphate synthetic domain; the sequence is IRSDKESVLV…ALYKAFEASY (383 aa). Residues 671-861 form the ATP-grasp 2 domain; the sequence is EQALKELDIP…MAQVATKLIL (191 aa). ATP is bound by residues Arg-707, Ser-746, Ile-748, Glu-752, Gly-777, Val-778, His-779, Ser-780, Gln-820, and Glu-832. Residues Gln-820, Glu-832, and Asn-834 each coordinate Mg(2+). Residues Gln-820, Glu-832, and Asn-834 each contribute to the Mn(2+) site. An MGS-like domain is found at 930–1058; that stretch reads LHLPTFGNVV…ESRSFVTEAI (129 aa). The allosteric domain stretch occupies residues 930–1058; that stretch reads LHLPTFGNVV…ESRSFVTEAI (129 aa).

This sequence belongs to the CarB family. Composed of two chains; the small (or glutamine) chain promotes the hydrolysis of glutamine to ammonia, which is used by the large (or ammonia) chain to synthesize carbamoyl phosphate. Tetramer of heterodimers (alpha,beta)4. Requires Mg(2+) as cofactor. Mn(2+) serves as cofactor.

The catalysed reaction is hydrogencarbonate + L-glutamine + 2 ATP + H2O = carbamoyl phosphate + L-glutamate + 2 ADP + phosphate + 2 H(+). The enzyme catalyses hydrogencarbonate + NH4(+) + 2 ATP = carbamoyl phosphate + 2 ADP + phosphate + 2 H(+). Its pathway is amino-acid biosynthesis; L-arginine biosynthesis; carbamoyl phosphate from bicarbonate: step 1/1. The protein operates within pyrimidine metabolism; UMP biosynthesis via de novo pathway; (S)-dihydroorotate from bicarbonate: step 1/3. Its function is as follows. Large subunit of the glutamine-dependent carbamoyl phosphate synthetase (CPSase). CPSase catalyzes the formation of carbamoyl phosphate from the ammonia moiety of glutamine, carbonate, and phosphate donated by ATP, constituting the first step of 2 biosynthetic pathways, one leading to arginine and/or urea and the other to pyrimidine nucleotides. The large subunit (synthetase) binds the substrates ammonia (free or transferred from glutamine from the small subunit), hydrogencarbonate and ATP and carries out an ATP-coupled ligase reaction, activating hydrogencarbonate by forming carboxy phosphate which reacts with ammonia to form carbamoyl phosphate. The polypeptide is Carbamoyl phosphate synthase large chain (Streptococcus pneumoniae (strain 70585)).